Reading from the N-terminus, the 127-residue chain is Ribosome-binding factor A (127 aa).

This sequence belongs to the RbfA family. In terms of assembly, monomer. Binds 30S ribosomal subunits, but not 50S ribosomal subunits or 70S ribosomes.

It localises to the cytoplasm. In terms of biological role, one of several proteins that assist in the late maturation steps of the functional core of the 30S ribosomal subunit. Associates with free 30S ribosomal subunits (but not with 30S subunits that are part of 70S ribosomes or polysomes). Required for efficient processing of 16S rRNA. May interact with the 5'-terminal helix region of 16S rRNA. The protein is Ribosome-binding factor A of Rickettsia typhi (strain ATCC VR-144 / Wilmington).